Consider the following 469-residue polypeptide: MKFIIVLLLFFFFKVIDRVICVTPQKLICLKEDVYLGDFFFFLKRKKYIMYDVNIGEGFNLQKEIFYRLSLVIYNLNKKDKINIYYLVLPPWCYVTHWNIRKGNNLRWEFFFNTDIMKKVIPIIEYEEYEKLYGNYSDIMINSKYILDNYKEKSFLILPFEECNINVNRFKQFCKKCEHKYNVLYSGYCTTINTKQSECYSYNMISNYFITSILENLFLYNITSVLIKQSTNILVPFVNELYQSNLEDILLFNNKLLSYGNNYISNILKTNHYISSHLRYTDFKYISRYNVPPIHIALLKLLYIMFINNCRIIFIASDEKVEIQKVINKDFHQYKKHFYFYNNQNNLHEGEFSIIEQWICTRSYIFIGNIFSRFTMNINWERHLINKGQINQNIDLCSYHINDDNDQDIKNSYKKIVHIFNHKALQKIKNIYDNYSDRDKKYINTICYNFLSHFPNNRSIYRKEYITNT.

Positions 1–18 (MKFIIVLLLFFFFKVIDR) are cleaved as a signal peptide. GDP-beta-L-fucose-binding positions include 56-60 (GEGFN), 277-279 (HLR), and 373-374 (RF). Glu57 serves as the catalytic Proton acceptor.

Belongs to the glycosyltransferase 68 family.

The protein resides in the endoplasmic reticulum. It carries out the reaction L-seryl-[protein] + GDP-beta-L-fucose = 3-O-(alpha-L-fucosyl)-L-seryl-[protein] + GDP + H(+). The enzyme catalyses L-threonyl-[protein] + GDP-beta-L-fucose = 3-O-(alpha-L-fucosyl)-L-threonyl-[protein] + GDP + H(+). Its pathway is protein modification; protein glycosylation. Catalyzes the reaction that attaches fucose through an O-glycosidic linkage to a conserved serine or threonine residue in the consensus sequence C1-X-X-S/T-C2 of thrombospondin type I repeats (TSRs) where C1 and C2 are the first and second cysteines of the repeat, respectively. O-fucosylates sporozoite proteins CSP and TRAP. O-fucosylation regulates stability and intracellular trafficking of TRAP but not of CSP. Probably by regulating protein O-fucosylation, may play a role in parasite transmission to the mosquito vector and/or infection of the vertebrate host hepatocytes; however, POFUT2 involvement in transmission/infection is controversial. The chain is GDP-fucose protein O-fucosyltransferase 2 from Plasmodium falciparum (isolate NF54).